We begin with the raw amino-acid sequence, 453 residues long: Bifunctional protein GlmU (453 aa).

The segment at methionine 1–arginine 231 is pyrophosphorylase. Residues leucine 10–glycine 13, lysine 24, glutamine 77, glycine 82–threonine 83, tyrosine 105–aspartate 107, glycine 143, glutamate 157, asparagine 172, and asparagine 229 contribute to the UDP-N-acetyl-alpha-D-glucosamine site. Residue aspartate 107 coordinates Mg(2+). Residue asparagine 229 participates in Mg(2+) binding. The linker stretch occupies residues alanine 232–serine 252. The segment at glycine 253 to alanine 453 is N-acetyltransferase. Positions 318 and 336 each coordinate UDP-N-acetyl-alpha-D-glucosamine. Catalysis depends on histidine 348, which acts as the Proton acceptor. UDP-N-acetyl-alpha-D-glucosamine contacts are provided by tyrosine 351 and asparagine 362. Residues alanine 365, asparagine 371–tyrosine 372, serine 390, serine 408, and arginine 425 contribute to the acetyl-CoA site.

This sequence in the N-terminal section; belongs to the N-acetylglucosamine-1-phosphate uridyltransferase family. In the C-terminal section; belongs to the transferase hexapeptide repeat family. In terms of assembly, homotrimer. It depends on Mg(2+) as a cofactor.

It is found in the cytoplasm. It catalyses the reaction alpha-D-glucosamine 1-phosphate + acetyl-CoA = N-acetyl-alpha-D-glucosamine 1-phosphate + CoA + H(+). The enzyme catalyses N-acetyl-alpha-D-glucosamine 1-phosphate + UTP + H(+) = UDP-N-acetyl-alpha-D-glucosamine + diphosphate. It functions in the pathway nucleotide-sugar biosynthesis; UDP-N-acetyl-alpha-D-glucosamine biosynthesis; N-acetyl-alpha-D-glucosamine 1-phosphate from alpha-D-glucosamine 6-phosphate (route II): step 2/2. It participates in nucleotide-sugar biosynthesis; UDP-N-acetyl-alpha-D-glucosamine biosynthesis; UDP-N-acetyl-alpha-D-glucosamine from N-acetyl-alpha-D-glucosamine 1-phosphate: step 1/1. Its pathway is bacterial outer membrane biogenesis; LPS lipid A biosynthesis. In terms of biological role, catalyzes the last two sequential reactions in the de novo biosynthetic pathway for UDP-N-acetylglucosamine (UDP-GlcNAc). The C-terminal domain catalyzes the transfer of acetyl group from acetyl coenzyme A to glucosamine-1-phosphate (GlcN-1-P) to produce N-acetylglucosamine-1-phosphate (GlcNAc-1-P), which is converted into UDP-GlcNAc by the transfer of uridine 5-monophosphate (from uridine 5-triphosphate), a reaction catalyzed by the N-terminal domain. The protein is Bifunctional protein GlmU of Rhizobium johnstonii (strain DSM 114642 / LMG 32736 / 3841) (Rhizobium leguminosarum bv. viciae).